A 342-amino-acid chain; its full sequence is Ketol-acid reductoisomerase (NADP(+)) (342 aa).

One can recognise a KARI N-terminal Rossmann domain in the interval 2–181; it reads VKVYYNGDIK…GGARAGVLET (180 aa). NADP(+) is bound by residues 25–28, Arg48, Ser52, and 82–85; these read YGSQ and DEQQ. His107 is an active-site residue. Gly133 provides a ligand contact to NADP(+). The KARI C-terminal knotted domain occupies 182-327; sequence TFKEETETDL…RKLREMMPFV (146 aa). Mg(2+)-binding residues include Asp190, Glu194, Glu226, and Glu230. Ser251 provides a ligand contact to substrate.

This sequence belongs to the ketol-acid reductoisomerase family. Mg(2+) is required as a cofactor.

It catalyses the reaction (2R)-2,3-dihydroxy-3-methylbutanoate + NADP(+) = (2S)-2-acetolactate + NADPH + H(+). The enzyme catalyses (2R,3R)-2,3-dihydroxy-3-methylpentanoate + NADP(+) = (S)-2-ethyl-2-hydroxy-3-oxobutanoate + NADPH + H(+). The protein operates within amino-acid biosynthesis; L-isoleucine biosynthesis; L-isoleucine from 2-oxobutanoate: step 2/4. It participates in amino-acid biosynthesis; L-valine biosynthesis; L-valine from pyruvate: step 2/4. Involved in the biosynthesis of branched-chain amino acids (BCAA). Catalyzes an alkyl-migration followed by a ketol-acid reduction of (S)-2-acetolactate (S2AL) to yield (R)-2,3-dihydroxy-isovalerate. In the isomerase reaction, S2AL is rearranged via a Mg-dependent methyl migration to produce 3-hydroxy-3-methyl-2-ketobutyrate (HMKB). In the reductase reaction, this 2-ketoacid undergoes a metal-dependent reduction by NADPH to yield (R)-2,3-dihydroxy-isovalerate. This Bacillus licheniformis (strain ATCC 14580 / DSM 13 / JCM 2505 / CCUG 7422 / NBRC 12200 / NCIMB 9375 / NCTC 10341 / NRRL NRS-1264 / Gibson 46) protein is Ketol-acid reductoisomerase (NADP(+)).